A 411-amino-acid chain; its full sequence is Z-DNA-binding protein 1 (411 aa).

Z-binding domains lie at 8-70 (LSTG…SIGG) and 84-148 (SSAQ…HSRQ). Glycyl lysine isopeptide (Lys-Gly) (interchain with G-Cter in ubiquitin) cross-links involve residues Lys17 and Lys43. Residues 60 to 86 (SPEPATWSIGGAASGDGAPAIPENSSA) form a disordered region. 2 consecutive short sequence motifs (RIP homotypic interaction motif (RHIM)) follow at residues 188–205 (NSNAIQIGHGNVIVREKA) and 237–261 (YIYMDKSLLQQVQLGHHNEMSLVGD). Disordered regions lie at residues 263 to 303 (GKHP…EGDT) and 332 to 411 (KGEV…LSKQ). Polar residues-rich tracts occupy residues 268-292 (YSFSDSPPEVSTTTADPGASFNMQT), 350-371 (GTSSEATPPRSCQHTPSDSMLP), and 400-411 (IESSQDTGLSKQ).

Homodimer. Interacts (via RIP homotypic interaction motif) with RIPK3; leading to RIPK3 activation and necroptosis; interaction is enhanced by CASP6. Interacts (via RIP homotypic interaction motif) with RIPK1. Component of the AIM2 PANoptosome complex, a multiprotein complex that drives inflammatory cell death (PANoptosis). In terms of assembly, (Microbial infection) Interacts (via RIP homotypic interaction motif) with murid herpesvirus protein RIR1 (via RIP homotypic interaction motif); leading to inhibition of ZBP1-dependent necroptosis. As to quaternary structure, (Microbial infection) Interacts with vaccinia virus E3 protein; leading to inhibit ZBP1-dependent necroptosis. In terms of processing, ubiquitinated; polyubiquitinated following influenza A virus (IAV) infection. Post-translationally, phosphorylated. In terms of tissue distribution, expressed in lung, spleen and liver. Lower levels were seen in heart, kidney and testis. Expression is greatly up-regulated in tumor stromal cells and activated macrophages.

The protein localises to the cytoplasm. It localises to the nucleus. Its activity is regulated as follows. ZBP1-dependent necroptosis is normally inhibited by RIPK1: RIPK1 inhibits the ZBP1-induced activation of RIPK3 via FADD-mediated recruitment of CASP8, which cleaves RIPK1 and limits TNF-induced necroptosis. Functionally, key innate sensor that recognizes and binds Z-RNA structures, which are produced by a number of viruses, such as herpesvirus, orthomyxovirus or flavivirus, and triggers different forms of cell death. ZBP1 acts as an essential mediator of pyroptosis, necroptosis and apoptosis (PANoptosis), an integral part of host defense against pathogens, by activating RIPK3, caspase-8 (CASP8), and the NLRP3 inflammasome. Key activator of necroptosis, a programmed cell death process in response to death-inducing TNF-alpha family members, via its ability to bind Z-RNA: once activated upon Z-RNA-binding, ZBP1 interacts and stimulates RIPK3 kinase, which phosphorylates and activates MLKL, triggering execution of programmed necrosis. In addition to TNF-induced necroptosis, necroptosis can also take place in the nucleus in response to orthomyxoviruses infection: ZBP1 recognizes and binds Z-RNA structures that are produced in infected nuclei by orthomyxoviruses, such as the influenza A virus (IAV), leading to ZBP1 activation, RIPK3 stimulation and subsequent MLKL phosphorylation, triggering disruption of the nuclear envelope and leakage of cellular DNA into the cytosol. ZBP1-dependent cell death in response to IAV infection promotes interleukin-1 alpha (IL1A) induction in an NLRP3-inflammasome-independent manner: IL1A expression is required for the optimal interleukin-1 beta (IL1B) production, and together, these cytokines promote infiltration of inflammatory neutrophils to the lung, leading to the formation of neutrophil extracellular traps. In addition to its direct role in driving necroptosis via its ability to sense Z-RNAs, also involved in PANoptosis triggered in response to bacterial infection: component of the AIM2 PANoptosome complex, a multiprotein complex that triggers PANoptosis. Also acts as the apical sensor of fungal infection responsible for activating PANoptosis. Involved in CASP8-mediated cell death via its interaction with RIPK1 but independently of its ability to sense Z-RNAs. In some cell types, also able to restrict viral replication by promoting cell death-independent responses. In response to flavivirus infection in neurons, promotes a cell death-independent pathway that restricts viral replication: together with RIPK3, promotes a death-independent transcriptional program that modifies the cellular metabolism via up-regulation expression of the enzyme ACOD1/IRG1 and production of the metabolite itaconate. Itaconate inhibits the activity of succinate dehydrogenase, generating a metabolic state in neurons that suppresses replication of viral genomes. The sequence is that of Z-DNA-binding protein 1 from Mus musculus (Mouse).